We begin with the raw amino-acid sequence, 215 residues long: NAD(P)H-quinone oxidoreductase subunit I (215 aa).

4Fe-4S ferredoxin-type domains lie at 55 to 84 and 95 to 124; these read GRIH…VDWV and RNYS…MTEE. [4Fe-4S] cluster is bound by residues Cys-64, Cys-67, Cys-70, Cys-74, Cys-104, Cys-107, Cys-110, and Cys-114. Residues 169–180 show a composition bias toward basic and acidic residues; it reads MDPHGVASDRPR. The segment at 169–215 is disordered; that stretch reads MDPHGVASDRPRAGQLPAQVLETLTPPAKPTAKNDGQSSSEAKEGDA.

It belongs to the complex I 23 kDa subunit family. NDH-1 is composed of at least 11 different subunits. It depends on [4Fe-4S] cluster as a cofactor.

Its subcellular location is the cellular thylakoid membrane. The enzyme catalyses a plastoquinone + NADH + (n+1) H(+)(in) = a plastoquinol + NAD(+) + n H(+)(out). It carries out the reaction a plastoquinone + NADPH + (n+1) H(+)(in) = a plastoquinol + NADP(+) + n H(+)(out). Its function is as follows. NDH-1 shuttles electrons from an unknown electron donor, via FMN and iron-sulfur (Fe-S) centers, to quinones in the respiratory and/or the photosynthetic chain. The immediate electron acceptor for the enzyme in this species is believed to be plastoquinone. Couples the redox reaction to proton translocation, and thus conserves the redox energy in a proton gradient. This Synechococcus sp. (strain CC9605) protein is NAD(P)H-quinone oxidoreductase subunit I.